Reading from the N-terminus, the 68-residue chain is MKLQEIKDFVKELRGLSQEELAKKENELKKELFDLRFQAAAGQLEKTARLDEVKKQIARVKTVQSEMK.

Belongs to the universal ribosomal protein uL29 family.

This Streptococcus agalactiae serotype Ia (strain ATCC 27591 / A909 / CDC SS700) protein is Large ribosomal subunit protein uL29.